The chain runs to 457 residues: Adenylosuccinate synthetase isozyme 1 (457 aa).

The tract at residues 1–25 (MSGTRASNDRPPSAGGVKRGRLQHE) is disordered. GTP is bound by residues 42 to 48 (GDEGKGK) and 70 to 72 (GHT). Aspartate 43 serves as the catalytic Proton acceptor. Mg(2+) contacts are provided by aspartate 43 and glycine 70. Aspartate 43 is a binding site for substrate. Residues 43–46 (DEGK), 68–71 (NAGH), threonine 163, arginine 177, asparagine 256, threonine 271, and arginine 335 contribute to the IMP site. Histidine 71 functions as the Proton donor in the catalytic mechanism. Residue 331-337 (VTTGRKR) participates in substrate binding. GTP is bound by residues arginine 337, 363–365 (KLD), and 445–448 (GVGK).

The protein belongs to the adenylosuccinate synthetase family. Homodimer. The cofactor is Mg(2+).

It is found in the cytoplasm. It catalyses the reaction IMP + L-aspartate + GTP = N(6)-(1,2-dicarboxyethyl)-AMP + GDP + phosphate + 2 H(+). The protein operates within purine metabolism; AMP biosynthesis via de novo pathway; AMP from IMP: step 1/2. Component of the purine nucleotide cycle (PNC), which interconverts IMP and AMP to regulate the nucleotide levels in various tissues, and which contributes to glycolysis and ammoniagenesis. Catalyzes the first committed step in the biosynthesis of AMP from IMP. The sequence is that of Adenylosuccinate synthetase isozyme 1 from Bos taurus (Bovine).